The chain runs to 280 residues: Ribosomal RNA small subunit methyltransferase A (280 aa).

Asn11, Leu13, Gly37, Glu57, Asp85, and Asn106 together coordinate S-adenosyl-L-methionine.

The protein belongs to the class I-like SAM-binding methyltransferase superfamily. rRNA adenine N(6)-methyltransferase family. RsmA subfamily.

The protein resides in the cytoplasm. It carries out the reaction adenosine(1518)/adenosine(1519) in 16S rRNA + 4 S-adenosyl-L-methionine = N(6)-dimethyladenosine(1518)/N(6)-dimethyladenosine(1519) in 16S rRNA + 4 S-adenosyl-L-homocysteine + 4 H(+). Functionally, specifically dimethylates two adjacent adenosines (A1518 and A1519) in the loop of a conserved hairpin near the 3'-end of 16S rRNA in the 30S particle. May play a critical role in biogenesis of 30S subunits. This Campylobacter concisus (strain 13826) protein is Ribosomal RNA small subunit methyltransferase A.